Consider the following 398-residue polypeptide: Probable purine permease 17 (398 aa).

The interval 1-26 (MEMSKASKQTTRHEESEHVQNPEPDQ) is disordered. The span at 11-20 (TRHEESEHVQ) shows a compositional bias: basic and acidic residues. Phosphoserine is present on S29. Helical transmembrane passes span 43-63 (ISVSLCLFLVLLGDSLVMLLL), 88-108 (WTQALIQNAAFPILIPLFFIF), 127-147 (LFFLYLSLGVLVAAHSKLFAL), 155-175 (GIFSLISTTQLIFTAVLTAII), 183-203 (WIIISILLTIVIYVLGTPDFG), 219-239 (WLAFSATIAFSLSLCLIQLGF), 258-278 (VLEMQICVAFVASVVCLVGLF), 301-321 (VLSLVGLALSWQVWAVGMIGL), 332-352 (VVHMCASPFVALFVVLAFDFM), and 355-375 (VFSWPRIGALIGTVLALGSYF).

This sequence belongs to the purine permeases (TC 2.A.7.14) family.

The protein resides in the membrane. The protein is Probable purine permease 17 (PUP17) of Arabidopsis thaliana (Mouse-ear cress).